Consider the following 92-residue polypeptide: Cell division topological specificity factor (92 aa).

The protein belongs to the MinE family.

Functionally, prevents the cell division inhibition by proteins MinC and MinD at internal division sites while permitting inhibition at polar sites. This ensures cell division at the proper site by restricting the formation of a division septum at the midpoint of the long axis of the cell. This Gluconobacter oxydans (strain 621H) (Gluconobacter suboxydans) protein is Cell division topological specificity factor.